The primary structure comprises 138 residues: Acidic phospholipase A2 MVL-PLA2 (138 aa).

The first 16 residues, 1-16 (MRTLWIVAVCLMGVEG), serve as a signal peptide directing secretion. Disulfide bonds link C42/C131, C44/C60, C59/C111, C65/C138, C66/C104, C73/C97, and C91/C102. Positions 43, 45, and 47 each coordinate Ca(2+). Residue H63 is part of the active site. Residue D64 coordinates Ca(2+). A May inhibit integrin function (Atypical cell attachment site) motif is present at residues 86 to 88 (NGD). The active site involves D105.

It belongs to the phospholipase A2 family. Group II subfamily. D49 sub-subfamily. Requires Ca(2+) as cofactor. In terms of tissue distribution, expressed by the venom gland.

It is found in the secreted. It carries out the reaction a 1,2-diacyl-sn-glycero-3-phosphocholine + H2O = a 1-acyl-sn-glycero-3-phosphocholine + a fatty acid + H(+). Functionally, snake venom phospholipase A2 (PLA2) that displays an inhibitory effect, independent from its catalytic activity, on tumor cell adhesion and migration. This effect is mediated via specific inhibition of integrins alpha-5/beta-1 (ITGA5/ITGB1), alpha-v/beta-3 (ITGAV/ITGB3) and alpha-v/beta-6 (ITGAV/ITGB6). PLA2 catalyzes the calcium-dependent hydrolysis of the 2-acyl groups in 3-sn-phosphoglycerides. The chain is Acidic phospholipase A2 MVL-PLA2 from Macrovipera lebetina transmediterranea (Blunt-nosed viper).